Here is a 363-residue protein sequence, read N- to C-terminus: NAD(P)H-quinone oxidoreductase subunit 1, chloroplastic (363 aa).

8 consecutive transmembrane segments (helical) span residues 27–47 (LIPI…IVWL), 93–113 (WLFS…YLVV), 124–144 (LGVG…GLLM), 162–182 (AAQA…VALL), 200–220 (ILGW…IASL), 250–270 (FGLF…FVSV), 303–323 (ATLG…LSIL), and 343–363 (FLLP…LALL).

The protein belongs to the complex I subunit 1 family. In terms of assembly, NDH is composed of at least 16 different subunits, 5 of which are encoded in the nucleus.

It is found in the plastid. The protein resides in the chloroplast thylakoid membrane. The catalysed reaction is a plastoquinone + NADH + (n+1) H(+)(in) = a plastoquinol + NAD(+) + n H(+)(out). It catalyses the reaction a plastoquinone + NADPH + (n+1) H(+)(in) = a plastoquinol + NADP(+) + n H(+)(out). Its function is as follows. NDH shuttles electrons from NAD(P)H:plastoquinone, via FMN and iron-sulfur (Fe-S) centers, to quinones in the photosynthetic chain and possibly in a chloroplast respiratory chain. The immediate electron acceptor for the enzyme in this species is believed to be plastoquinone. Couples the redox reaction to proton translocation, and thus conserves the redox energy in a proton gradient. The protein is NAD(P)H-quinone oxidoreductase subunit 1, chloroplastic of Chaetosphaeridium globosum (Charophycean green alga).